Reading from the N-terminus, the 245-residue chain is MADGFSLNDALAGSGNPNPQGWPGAWGNQPGAGGYPGASYPGAYPGQAPPGAYPGQAPPGAYPGPTAPGAYPGPAPGAYPGQPGASGAYPSAPGAYPAAGPYGAPTGALTVPYKLPLAGGVMPRMLITIMGTVKPNANRIILNFLRGNDIAFHFNPRFNENNRRVIVCNTKQDNNWGREERQSAFPFESGRPFKIQVLVEADHFKVAVNDAHLLQYNHRMKNLREINQMEISGDITLTSAAPTMI.

The tract at residues M1–P30 is disordered. A2 is modified (N-acetylalanine). Position 6 is a phosphoserine; by CK1 (S6). 4 consecutive repeat copies span residues Y35–A43, Y44–A52, Y53–A61, and Y62–A70. The segment at Y35–A99 is 7 X 9 AA tandem repeats of Y-P-G-X(3)-P-[GS]-A. The tract at residues Q47–P68 is disordered. The 5; approximate repeat unit spans residues Y71 to A78. One copy of the 6; approximate repeat lies at Y79–A88. The stretch at Y89–A99 is one 7; approximate repeat. The 131-residue stretch at Y113–T243 folds into the Galectin domain. W176–Q182 contributes to the a beta-D-galactoside binding site. S183 is modified (phosphoserine). The Nuclear export signal motif lies at K221–T236.

In terms of assembly, probably forms homo- or heterodimers. Interacts with DMBT1. Interacts with CD6 and ALCAM. Forms a complex with the ITGA3, ITGB1 and CSPG4. Interacts with LGALS3BP, LYPD3, ZFTRAF1 and UACA. Interacts with TRIM16; this interaction mediates autophagy of damage endomembranes. Interacts with cargo receptor TMED10; the interaction mediates the translocation from the cytoplasm into the ERGIC (endoplasmic reticulum-Golgi intermediate compartment) and thereby secretion. Interacts with and inhibits by binding NCR3/NKp30.

It localises to the cytoplasm. Its subcellular location is the nucleus. The protein localises to the secreted. Functionally, galactose-specific lectin which binds IgE. May mediate with the alpha-3, beta-1 integrin the stimulation by CSPG4 of endothelial cells migration. Together with DMBT1, required for terminal differentiation of columnar epithelial cells during early embryogenesis. In the nucleus: acts as a pre-mRNA splicing factor. Involved in acute inflammatory responses including neutrophil activation and adhesion, chemoattraction of monocytes macrophages, opsonization of apoptotic neutrophils, and activation of mast cells. Together with TRIM16, coordinates the recognition of membrane damage with mobilization of the core autophagy regulators ATG16L1 and BECN1 in response to damaged endomembranes. When secreted, interacts with NK cell-activating receptor NCR3/NKp30 acting as an inhibitory ligand which antagonizes NK cell attack. The polypeptide is Galectin-3 (LGALS3) (Cricetulus longicaudatus (Long-tailed dwarf hamster)).